Reading from the N-terminus, the 197-residue chain is uncharacterized protein (197 aa).

Residues 150–172 (SLKLNTTLPMFALNLICLLRSIL) traverse the membrane as a helical segment.

The protein resides in the membrane. This is an uncharacterized protein from Saccharomyces cerevisiae (strain ATCC 204508 / S288c) (Baker's yeast).